Consider the following 855-residue polypeptide: Suppressor of tumorigenicity 14 protein homolog (855 aa).

The segment at 1–21 (MKSERARRGAGGSGDLGAGFK) is disordered. The Cytoplasmic portion of the chain corresponds to 1 to 55 (MKSERARRGAGGSGDLGAGFKYTSRPENMNGCEEGVEFLPANNSSKVEKGGPRRW). The residue at position 13 (S13) is a Phosphoserine. Residues 56–76 (VVLMAVLAAFLALSLLAGLLA) form a helical; Signal-anchor for type II membrane protein membrane-spanning segment. Residues 77–855 (WHFQDRNVRV…RDWIKAQIGV (779 aa)) are Extracellular-facing. An SEA domain is found at 86-203 (VQKIFNGYLS…TSVVAFPSDP (118 aa)). N-linked (GlcNAc...) asparagine glycosylation occurs at N109. Cysteines 214 and 244 form a disulfide. 2 consecutive CUB domains span residues 214–334 (CSFA…FFQL) and 340–447 (CGGY…FLSF). N-linked (GlcNAc...) asparagine glycosylation is found at N302 and N365. 15 disulfides stabilise this stretch: C340-C366, C397-C410, C453-C464, C459-C477, C471-C486, C488-C501, C496-C514, C508-C523, C525-C537, C532-C550, C544-C559, C567-C579, C574-C593, C587-C602, and C641-C657. 4 LDL-receptor class A domains span residues 452-487 (PCPGSFMCNTGRCIRKELRCDGWADCTDYSDELDCK), 487-524 (KCNATYQFTCRDKFCKPLFWVCDSVKDCEDGSDEEGCS), 524-560 (SCPPNTFKCGNGKCLPQSQQCDRKDDCGDGSDEAKCQ), and 566-603 (PCTEHTHRCLNGLCVDKSNPQCDGNEDCTDGSDEKDCD). N489 carries an N-linked (GlcNAc...) asparagine glycan. The Peptidase S1 domain maps to 615–854 (VVGGENSDQG…FRDWIKAQIG (240 aa)). Residues H656 and D711 each act as charge relay system in the active site. Residue N772 is glycosylated (N-linked (GlcNAc...) asparagine). Disulfide bonds link C776–C790 and C801–C830. The active-site Charge relay system is S805.

This sequence belongs to the peptidase S1 family. As to quaternary structure, interacts with CDCP1. May interact with TMEFF1.

The protein localises to the membrane. The enzyme catalyses Cleaves various synthetic substrates with Arg or Lys at the P1 position and prefers small side-chain amino acids, such as Ala and Gly, at the P2 position.. Functionally, exhibits trypsin-like activity as defined by cleavage of synthetic substrates with Arg or Lys as the P1 site. Involved in the terminal differentiation of keratinocytes through prostasin (PRSS8) activation and filaggrin (FLG) processing. Proteolytically cleaves and therefore activates TMPRSS13. The chain is Suppressor of tumorigenicity 14 protein homolog (ST14) from Bos taurus (Bovine).